A 214-amino-acid polypeptide reads, in one-letter code: NADH-ubiquinone oxidoreductase chain 5 (214 aa).

4 consecutive transmembrane segments (helical) span residues 14-34, 58-78, 92-112, and 192-212; these read LNTW…TYSI, PLIT…GMII, MPLI…ILAL, and TGLI…MILM.

The protein belongs to the complex I subunit 5 family.

Its subcellular location is the mitochondrion inner membrane. It carries out the reaction a ubiquinone + NADH + 5 H(+)(in) = a ubiquinol + NAD(+) + 4 H(+)(out). Its function is as follows. Core subunit of the mitochondrial membrane respiratory chain NADH dehydrogenase (Complex I) that is believed to belong to the minimal assembly required for catalysis. Complex I functions in the transfer of electrons from NADH to the respiratory chain. The immediate electron acceptor for the enzyme is believed to be ubiquinone. In Anser caerulescens (Snow goose), this protein is NADH-ubiquinone oxidoreductase chain 5 (MT-ND5).